We begin with the raw amino-acid sequence, 410 residues long: Methylamine dehydrogenase heavy chain (410 aa).

The signal sequence occupies residues 1–35; that stretch reads MTHAYTKVRQALCYGSATLGAAALAALIAAGSAAA.

This sequence belongs to the aromatic amine dehydrogenase heavy chain family. In terms of assembly, tetramer of two light and two heavy chains.

It localises to the periplasm. The catalysed reaction is 2 oxidized [amicyanin] + methylamine + H2O = 2 reduced [amicyanin] + formaldehyde + NH4(+) + 2 H(+). In terms of biological role, methylamine dehydrogenase carries out the oxidation of methylamine. Electrons are passed from methylamine dehydrogenase to amicyanin. The chain is Methylamine dehydrogenase heavy chain (mauB) from Methylorubrum extorquens (strain ATCC 14718 / DSM 1338 / JCM 2805 / NCIMB 9133 / AM1) (Methylobacterium extorquens).